Here is a 147-residue protein sequence, read N- to C-terminus: Lysozyme C-2 (147 aa).

The N-terminal stretch at 1–18 is a signal peptide; the sequence is MKALVILGFLFLSVAVQG. The C-type lysozyme domain maps to 19 to 147; the sequence is KVFERCELAR…VSSYVEGCTL (129 aa). Disulfide bonds link C24–C145, C48–C133, C83–C99, and C95–C113. Catalysis depends on residues E53 and D71.

It belongs to the glycosyl hydrolase 22 family. Monomer. As to expression, stomach-specific.

It carries out the reaction Hydrolysis of (1-&gt;4)-beta-linkages between N-acetylmuramic acid and N-acetyl-D-glucosamine residues in a peptidoglycan and between N-acetyl-D-glucosamine residues in chitodextrins.. In terms of biological role, lysozymes have primarily a bacteriolytic function; those in tissues and body fluids are associated with the monocyte-macrophage system and enhance the activity of immunoagents. The polypeptide is Lysozyme C-2 (LYZ2) (Bos taurus (Bovine)).